The sequence spans 1001 residues: MKRKMLKRLLTSAFACMFIANGLITTTVRAVGPKTGEENQVLVPNLNPTPENLEVVGDGFKITSSINLVGEEEADENAVNALREFLTANNIEINSENDPNSTTLIIGEVDDDIPELDEALNGTTAENLKEEGYALVSNDGKIAIEGKDGDGTFYGVQTFKQLVKESNIPEVNITDYPTVSARGIVEGFYGTPWTHQDRLDQIKFYGENKLNTYIYAPKDDPYHREKWREPYPESEMQRMQELINASAENKVDFVFGISPGIDIRFDGDAGEEDFNHLITKAESLYDMGVRSFAIYWDDIQDKSAAKHAQVLNRFNEEFVKAKGDVKPLITVPTEYDTGAMVSNGQPRAYTRIFAETVDPSIEVMWTGPGVVTNEIPLSDAQLISGIYNRNMAVWWNYPVTDYFKGKLALGPMHGLDKGLNQYVDFFTVNPMEHAELSKISIHTAADYSWNMDNYDYDKAWNRAIDMLYGDLAEDMKVFANHSTRMDNKTWAKSGREDAPELRAKMDELWNKLSSKEDASALIEELYGEFARMEEACNNLKANLPEVALEECSRQLDELITLAQGDKASLDMIVAQLNEDTEAYESAKEIAQNKLNTALSSFAVISEKVAQSFIQEALSFDLTLINPRTVKITASSEETSGENAPASFASDGDMNTFWHSKWSSPAHEGPHHLTLELDNVYEINKVKYAPRQDSKNGRITGYKVSVSLDGENFTEVKTGTLEDNAAIKFIEFDSVDAKYVRLDVTDSVSDQANGRGKFATAAEVNVHGKLKENAEVTGSVSLEALEEVQVGENLEVGVGIDELVNAEAFAYDFTLNYDENAFEYVEAISDDGVFVNAKKIEDGKVRVLVSSLTGEPLPAKEVLAKVVLRAEAKAEGSNLSVTNSSVGDGEGLVHEIAGTEKTVNIIEGTSPEIVVNPVRDFKASEINKKNVTVTWTEPETTEGLEGYILYKDGKKVAEIGKDETSYTFKKLNRHTIYNFKIAAKYSNGEVSSKESLTLRTAR.

Positions 1–30 are cleaved as a signal peptide; it reads MKRKMLKRLLTSAFACMFIANGLITTTVRA. A catalytic domain region spans residues 179 to 469; that stretch reads VSARGIVEGF…WNRAIDMLYG (291 aa). One can recognise a GH84 domain in the interval 180–452; it reads SARGIVEGFY…TAADYSWNMD (273 aa). A protein contacts are provided by Gly187, Lys218, and Asp297. The active-site Proton donor is the Asp298. Residues Tyr335, 394–396, Asp401, and Asn429 each bind a protein; that span reads WWN. Coiled coils occupy residues 515 to 543 and 573 to 597; these read KEDASALIEELYGEFARMEEACNNLKANL and VAQLNEDTEAYESAKEIAQNKLNTA. The Fibronectin type-III domain maps to 916–1001; that stretch reads PVRDFKASEI…KESLTLRTAR (86 aa).

The protein belongs to the glycosyl hydrolase 84 family.

The enzyme catalyses 3-O-(N-acetyl-beta-D-glucosaminyl)-L-seryl-[protein] + H2O = N-acetyl-D-glucosamine + L-seryl-[protein]. It catalyses the reaction 3-O-(N-acetyl-beta-D-glucosaminyl)-L-threonyl-[protein] + H2O = L-threonyl-[protein] + N-acetyl-D-glucosamine. Its activity is regulated as follows. Inhibited by O-(2-acetamido-2-deoxy-D-glucopyranosylidene)amino-N-phenyl-carbamate (PUGNAc) and streptozotocin. In terms of biological role, binds carbohydrates. Capable of hydrolyzing the glycosidic link of O-GlcNAcylated proteins. Can bind and deglycosylate O-glycosylated peptides from mammals. This is O-GlcNAcase NagJ (nagJ) from Clostridium perfringens (strain ATCC 13124 / DSM 756 / JCM 1290 / NCIMB 6125 / NCTC 8237 / Type A).